Here is a 349-residue protein sequence, read N- to C-terminus: Thioredoxin-related transmembrane protein 4 (349 aa).

A signal peptide spans 1–23 (MAGGRCGPQLTALLAAWIAAVAA). The 108-residue stretch at 30 to 137 (AALPPEQSRV…FEDLQNYILE (108 aa)) folds into the Thioredoxin domain. Active-site nucleophile residues include Cys64 and Cys67. Cys64 and Cys67 are disulfide-bonded. Residues 190–210 (VFFVIATLVFGLFMGLVLVVI) traverse the membrane as a helical segment. The segment covering 225–240 (RSEQNRRSEEAHRAEQ) has biased composition (basic and acidic residues). The disordered stretch occupies residues 225–349 (RSEQNRRSEE…RKSQHADKGL (125 aa)). Acidic residues-rich tracts occupy residues 242-284 (QDAE…EEDN) and 312-321 (VEPEEAEEGI). Residues Ser251 and Ser259 each carry the phosphoserine modification. Residues 335 to 349 (DSLRQRKSQHADKGL) show a composition bias toward basic and acidic residues.

The protein localises to the nucleus inner membrane. It is found in the endoplasmic reticulum membrane. This chain is Thioredoxin-related transmembrane protein 4 (TMX4), found in Homo sapiens (Human).